Here is a 208-residue protein sequence, read N- to C-terminus: Methylthioribulose-1-phosphate dehydratase (208 aa).

Positions 99 and 101 each coordinate Zn(2+).

Belongs to the aldolase class II family. MtnB subfamily. It depends on Zn(2+) as a cofactor.

It carries out the reaction 5-(methylsulfanyl)-D-ribulose 1-phosphate = 5-methylsulfanyl-2,3-dioxopentyl phosphate + H2O. It functions in the pathway amino-acid biosynthesis; L-methionine biosynthesis via salvage pathway; L-methionine from S-methyl-5-thio-alpha-D-ribose 1-phosphate: step 2/6. Its function is as follows. Catalyzes the dehydration of methylthioribulose-1-phosphate (MTRu-1-P) into 2,3-diketo-5-methylthiopentyl-1-phosphate (DK-MTP-1-P). The polypeptide is Methylthioribulose-1-phosphate dehydratase (Aquifex aeolicus (strain VF5)).